Here is a 383-residue protein sequence, read N- to C-terminus: Arginine biosynthesis bifunctional protein ArgJ 1 (383 aa).

A disordered region spans residues 1–25; the sequence is MTVTAPKGSTGGGCRRGSKESGQPD. Substrate contacts are provided by Thr-146, Lys-168, Thr-179, Glu-259, Asn-378, and Ser-383. Catalysis depends on Thr-179, which acts as the Nucleophile.

The protein belongs to the ArgJ family. Heterotetramer of two alpha and two beta chains.

Its subcellular location is the cytoplasm. The catalysed reaction is N(2)-acetyl-L-ornithine + L-glutamate = N-acetyl-L-glutamate + L-ornithine. It carries out the reaction L-glutamate + acetyl-CoA = N-acetyl-L-glutamate + CoA + H(+). The protein operates within amino-acid biosynthesis; L-arginine biosynthesis; L-ornithine and N-acetyl-L-glutamate from L-glutamate and N(2)-acetyl-L-ornithine (cyclic): step 1/1. Its pathway is amino-acid biosynthesis; L-arginine biosynthesis; N(2)-acetyl-L-ornithine from L-glutamate: step 1/4. Its function is as follows. Catalyzes two activities which are involved in the cyclic version of arginine biosynthesis: the synthesis of N-acetylglutamate from glutamate and acetyl-CoA as the acetyl donor, and of ornithine by transacetylation between N(2)-acetylornithine and glutamate. In Streptomyces clavuligerus, this protein is Arginine biosynthesis bifunctional protein ArgJ 1.